The sequence spans 620 residues: Notoamide biosynthesis transcriptional activator notL' (620 aa).

Residues 1–26 (MPPSSKSRRLPPAASDSAASDAQKRR) form a disordered region. The zn(2)-C6 fungal-type DNA-binding region spans 33–59 (CSACKARKLKCTGAPPCANCVKSRIEC). The segment at 591–620 (ETGAFFLDPDQPSGNSTPIKSETPEGTAIS) is disordered.

Its subcellular location is the nucleus. Transcription factor that probably regulates the expression of the gene cluster that mediates the biosynthesis of notoamide, a fungal indole alkaloid that belongs to a family of natural products containing a characteristic bicyclo[2.2.2]diazaoctane core. The chain is Notoamide biosynthesis transcriptional activator notL' from Aspergillus versicolor.